Consider the following 439-residue polypeptide: Histidine--tRNA ligase (439 aa).

Belongs to the class-II aminoacyl-tRNA synthetase family. Homodimer.

The protein resides in the cytoplasm. The catalysed reaction is tRNA(His) + L-histidine + ATP = L-histidyl-tRNA(His) + AMP + diphosphate + H(+). This chain is Histidine--tRNA ligase, found in Clostridium tetani (strain Massachusetts / E88).